A 106-amino-acid chain; its full sequence is uncharacterized protein (106 aa).

The span at 24–35 shows a compositional bias: polar residues; the sequence is ANSISSTSFYHK. 2 disordered regions span residues 24–49 and 65–87; these read ANSI…SCEE and LTAE…SSDE. Low complexity-rich tracts occupy residues 36-46 and 74-85; these read SSNNNSHANAS and SLSASNQPASSS.

This is an uncharacterized protein from Arabidopsis thaliana (Mouse-ear cress).